A 173-amino-acid chain; its full sequence is Crossover junction endodeoxyribonuclease RuvC (173 aa).

Active-site residues include Asp-11, Glu-71, and Asp-143. Residues Asp-11, Glu-71, and Asp-143 each coordinate Mg(2+).

Belongs to the RuvC family. As to quaternary structure, homodimer which binds Holliday junction (HJ) DNA. The HJ becomes 2-fold symmetrical on binding to RuvC with unstacked arms; it has a different conformation from HJ DNA in complex with RuvA. In the full resolvosome a probable DNA-RuvA(4)-RuvB(12)-RuvC(2) complex forms which resolves the HJ. The cofactor is Mg(2+).

The protein localises to the cytoplasm. The catalysed reaction is Endonucleolytic cleavage at a junction such as a reciprocal single-stranded crossover between two homologous DNA duplexes (Holliday junction).. Its function is as follows. The RuvA-RuvB-RuvC complex processes Holliday junction (HJ) DNA during genetic recombination and DNA repair. Endonuclease that resolves HJ intermediates. Cleaves cruciform DNA by making single-stranded nicks across the HJ at symmetrical positions within the homologous arms, yielding a 5'-phosphate and a 3'-hydroxyl group; requires a central core of homology in the junction. The consensus cleavage sequence is 5'-(A/T)TT(C/G)-3'. Cleavage occurs on the 3'-side of the TT dinucleotide at the point of strand exchange. HJ branch migration catalyzed by RuvA-RuvB allows RuvC to scan DNA until it finds its consensus sequence, where it cleaves and resolves the cruciform DNA. The protein is Crossover junction endodeoxyribonuclease RuvC of Brucella suis (strain ATCC 23445 / NCTC 10510).